A 494-amino-acid polypeptide reads, in one-letter code: Transmembrane and coiled-coil domain-containing protein 6 (494 aa).

Positions 15–39 form a coiled coil; sequence GVEELRRRRREREAALRKARREQQL. A run of 2 helical transmembrane segments spans residues 338–358 and 386–406; these read LVAA…ALLP and PLLQ…TVLC.

It is found in the membrane. This is Transmembrane and coiled-coil domain-containing protein 6 (Tmco6) from Mus musculus (Mouse).